The chain runs to 190 residues: Threonylcarbamoyl-AMP synthase (190 aa).

The 184-residue stretch at 7–190 (RDAIAAAIDV…ALTGELFRQG (184 aa)) folds into the YrdC-like domain.

The protein belongs to the SUA5 family. TsaC subfamily.

The protein localises to the cytoplasm. The enzyme catalyses L-threonine + hydrogencarbonate + ATP = L-threonylcarbamoyladenylate + diphosphate + H2O. In terms of biological role, required for the formation of a threonylcarbamoyl group on adenosine at position 37 (t(6)A37) in tRNAs that read codons beginning with adenine. Catalyzes the conversion of L-threonine, HCO(3)(-)/CO(2) and ATP to give threonylcarbamoyl-AMP (TC-AMP) as the acyladenylate intermediate, with the release of diphosphate. This Escherichia coli O9:H4 (strain HS) protein is Threonylcarbamoyl-AMP synthase.